The primary structure comprises 556 residues: Probable glucomannan 4-beta-mannosyltransferase 3 (556 aa).

Residues 56–76 traverse the membrane as a helical segment; it reads IFVFIPILKCLVTICLVMSLL. Aspartate 159 is a catalytic residue. Substrate contacts are provided by aspartate 218 and aspartate 220. The active site involves aspartate 312. 4 helical membrane-spanning segments follow: residues 391–411, 428–448, 509–529, and 530–550; these read IVVHIFTFVFYCLILPTTVLF, ITILNAIATPRSLHLLVFWIL, LVVGLYIFFCGCYDFAYGGSY, and FYVYLFLQSCAFFVAGVGYIG.

This sequence belongs to the glycosyltransferase 2 family. Plant cellulose synthase-like A subfamily.

It localises to the golgi apparatus membrane. It carries out the reaction GDP-mannose + (glucomannan)n = GDP + (glucomannan)n+1.. Probable mannan synthase which consists of a 4-beta-mannosyltransferase activity on mannan using GDP-mannose. The beta-1,4-mannan product is the backbone for galactomannan synthesis by galactomannan galactosyltransferase. Galactomannan is a noncellulosic polysaccharides of plant cell wall. This Arabidopsis thaliana (Mouse-ear cress) protein is Probable glucomannan 4-beta-mannosyltransferase 3.